Here is a 460-residue protein sequence, read N- to C-terminus: Chromosomal replication initiator protein DnaA (460 aa).

A domain I, interacts with DnaA modulators region spans residues 1–84; that stretch reads MAVSLWQQCI…RFDIGSRPSA (84 aa). A domain II region spans residues 84–123; sequence AKKPEPAPVAAVRVPNPQTKASVGTSFNTTEPVVNANHRS. Residues 124 to 340 are domain III, AAA+ region; the sequence is NINPTYQFDN…GALNRVIANA (217 aa). 4 residues coordinate ATP: Gly168, Gly170, Lys171, and Thr172. Residues 341-460 form a domain IV, binds dsDNA region; that stretch reads NFTGRPITID…YANLIRTLSS (120 aa).

The protein belongs to the DnaA family. As to quaternary structure, oligomerizes as a right-handed, spiral filament on DNA at oriC.

It localises to the cytoplasm. Functionally, plays an essential role in the initiation and regulation of chromosomal replication. ATP-DnaA binds to the origin of replication (oriC) to initiate formation of the DNA replication initiation complex once per cell cycle. Binds the DnaA box (a 9 base pair repeat at the origin) and separates the double-stranded (ds)DNA. Forms a right-handed helical filament on oriC DNA; dsDNA binds to the exterior of the filament while single-stranded (ss)DNA is stabiized in the filament's interior. The ATP-DnaA-oriC complex binds and stabilizes one strand of the AT-rich DNA unwinding element (DUE), permitting loading of DNA polymerase. After initiation quickly degrades to an ADP-DnaA complex that is not apt for DNA replication. Binds acidic phospholipids. The polypeptide is Chromosomal replication initiator protein DnaA (Shewanella sp. (strain MR-7)).